The chain runs to 842 residues: Xyloglucanase Xgh74A (842 aa).

The N-terminal stretch at 1–32 (MVKKFTSKIKAAVFAAVVAATAIFGPAISSQA) is a signal peptide. Aspartate 70 (nucleophile) is an active-site residue. BNR repeat units lie at residues 134–144 (RSTDRGETWEK), 185–196 (WRSTDYGVTWSK), 252–262 (YRSTDGGVTWK), and 358–368 (FRSTDGGATWK). The Proton donor role is filled by aspartate 480. 5 BNR repeats span residues 533–541 (FSYDGGRNW), 577–586 (VTTDNGNSWK), 616–626 (YISTDGGLTFT), 660–671 (WRSTDGGYTFEK), and 708–718 (FRSDDAGKTWV). Residues 771-841 (DKGLVGDLNG…LLQAIPELPK (71 aa)) form the Dockerin domain.

This sequence belongs to the glycosyl hydrolase 74 family.

Hydrolyzes the glucosidic bonds of unbranched Glc residues in tamarind seed xyloglucan, producing XXXG, XLXG, XXLG and XLLG. Has low activity on carboxymethylcellulose, lichenan,hydroxyethylcellulose and glucuronoxylan, and no activity on xylan, polygalaturonic acid, wheat arabinoxylan, rhamnogalacturan, curdlan, laminarin, galactomannan, galactan, arabinan and pachyman or amorphous cellulose. The protein is Xyloglucanase Xgh74A of Acetivibrio thermocellus (strain ATCC 27405 / DSM 1237 / JCM 9322 / NBRC 103400 / NCIMB 10682 / NRRL B-4536 / VPI 7372) (Clostridium thermocellum).